The chain runs to 338 residues: Envelope glycoprotein K (338 aa).

A signal peptide spans 1 to 30; that stretch reads MLAVRSLQHLSTVVLITAYGLVLVWYTVFG. The Extracellular portion of the chain corresponds to 31–121; it reads ASPLHRCIYA…VNCLETLWYT (91 aa). Residues 31 to 121 are involved in fusion; the sequence is ASPLHRCIYA…VNCLETLWYT (91 aa). 2 N-linked (GlcNAc...) asparagine; by host glycosylation sites follow: N48 and N58. Residues 122–140 traverse the membrane as a helical segment; it reads RVRLVVVGWFLYLAFVALH. The Cytoplasmic segment spans residues 141–212; it reads QRRCMFGVVS…DPVTFLYHRP (72 aa). Residues 213–233 form a helical membrane-spanning segment; it reads AIGVIVGCELMLRFVAVGLIV. Over 234-243 the chain is Extracellular; sequence GTAFISRGAC. A helical membrane pass occupies residues 244 to 264; it reads AITYPLFLTITTWCFVSTIGL. Residues 265 to 301 lie on the Cytoplasmic side of the membrane; the sequence is TELYCILRRGPAPKNADKAAAPGRSKGLSGVCGRCCS. An interaction with UL20 region spans residues 265-301; the sequence is TELYCILRRGPAPKNADKAAAPGRSKGLSGVCGRCCS. A helical membrane pass occupies residues 302-322; that stretch reads IILSGIAVRLCYIAVVAGVVL. Topologically, residues 323–338 are extracellular; the sequence is VALHYEQEIQRRLFDV.

The protein belongs to the alphaherpesvirinae glycoprotein K family. As to quaternary structure, interacts (via UL20 interaction region) with protein UL20 (via N-terminus); this interaction probably plays a role in the coordinate transport of protein UL20 and gK to the trans-Golgi network (TGN), and is required for the cell surface expression of gK. In terms of processing, N-glycosylated.

It localises to the host cell membrane. The protein resides in the host endosome membrane. The protein localises to the host Golgi apparatus membrane. Functionally, glycoprotein that probably modulates membrane fusion events during secondary envelopment of cytoplasmic capsids that bud into specific trans-Golgi network (TGN)-derived membranes. Also plays a role, together with gB, in virus-induced cell-to-cell fusion (syncytia formation). Seems to block fusion of virions with infected-cell membranes. The sequence is that of Envelope glycoprotein K (gK) from Homo sapiens (Human).